Consider the following 320-residue polypeptide: UV DNA damage endonuclease (320 aa).

The protein belongs to the uve1/UvsE family.

Functionally, component in a DNA repair pathway. Removal of UV LIGHT damaged nucleotides. Recognizes pyrimidine dimers and cleave a phosphodiester bond immediately 5' to the lesion. The protein is UV DNA damage endonuclease of Bacillus velezensis (strain DSM 23117 / BGSC 10A6 / LMG 26770 / FZB42) (Bacillus amyloliquefaciens subsp. plantarum).